Consider the following 167-residue polypeptide: Bacterioferritin (167 aa).

The region spanning 1–145 (MQGDPEVIEF…TQLDLIEKLG (145 aa)) is the Ferritin-like diiron domain. Residues Glu-18 and Glu-51 each coordinate Fe cation. Residue Met-52 coordinates heme b. Residues His-54, Glu-94, Glu-127, and His-130 each coordinate Fe cation.

Belongs to the bacterioferritin family. In terms of assembly, homooligomer of 24 subunits, arranged as 12 dimers, that are packed together to form an approximately spherical molecule with a central cavity, in which large amounts of iron can be deposited. Requires heme b as cofactor.

The catalysed reaction is 4 Fe(2+) + O2 + 4 H(+) = 4 Fe(3+) + 2 H2O. It carries out the reaction Fe(2+)(in) = Fe(2+)(out). In terms of biological role, iron-storage protein, whose ferroxidase center binds Fe(2+), oxidizes it using dioxygen to Fe(3+), and participates in the subsequent Fe(3+) oxide mineral core formation within the central cavity of the BFR protein shell. The protein is Bacterioferritin (bfr) of Streptomyces coelicolor (strain ATCC BAA-471 / A3(2) / M145).